The following is a 430-amino-acid chain: Histidinol dehydrogenase (430 aa).

NAD(+) is bound by residues Y129, Q190, and N213. Residues S236, Q258, and H261 each coordinate substrate. Zn(2+)-binding residues include Q258 and H261. Residues E326 and H327 each act as proton acceptor in the active site. Residues H327, D360, E414, and H419 each coordinate substrate. A Zn(2+)-binding site is contributed by D360. Position 419 (H419) interacts with Zn(2+).

The protein belongs to the histidinol dehydrogenase family. Requires Zn(2+) as cofactor.

The enzyme catalyses L-histidinol + 2 NAD(+) + H2O = L-histidine + 2 NADH + 3 H(+). The protein operates within amino-acid biosynthesis; L-histidine biosynthesis; L-histidine from 5-phospho-alpha-D-ribose 1-diphosphate: step 9/9. In terms of biological role, catalyzes the sequential NAD-dependent oxidations of L-histidinol to L-histidinaldehyde and then to L-histidine. The chain is Histidinol dehydrogenase from Gluconobacter oxydans (strain 621H) (Gluconobacter suboxydans).